A 216-amino-acid polypeptide reads, in one-letter code: MYNVIFLGAPGSGKGTQGEVVAKELRLAHMATGDLFRKAIERGDELGDTVKSYMERGELVPDEITISVVLKHLAGLKDVSGIILDGFPRSLRQAEALDEALVKQGEGIGRVIYINVPEDELVRRLSGRWVCRSCQSPYQCGCAEVAEGKCSRCQGELYQRPDDTPETVKERLKVYFSKTAPLIEYYRSKGKLSEIDGMAEITEVTKRIVSAIKCGK.

11–16 (GSGKGT) is an ATP binding site. Residues 31-60 (ATGDLFRKAIERGDELGDTVKSYMERGELV) form an NMP region. Residues T32, R37, 58–60 (ELV), 86–89 (GFPR), and Q93 each bind AMP. The segment at 127–163 (GRWVCRSCQSPYQCGCAEVAEGKCSRCQGELYQRPDD) is LID. ATP is bound at residue R128. Zn(2+) contacts are provided by C131, C134, C150, and C153. R160 and R171 together coordinate AMP. Residue A199 participates in ATP binding.

Belongs to the adenylate kinase family. In terms of assembly, monomer.

It localises to the cytoplasm. It carries out the reaction AMP + ATP = 2 ADP. It participates in purine metabolism; AMP biosynthesis via salvage pathway; AMP from ADP: step 1/1. In terms of biological role, catalyzes the reversible transfer of the terminal phosphate group between ATP and AMP. Plays an important role in cellular energy homeostasis and in adenine nucleotide metabolism. This is Adenylate kinase from Dehalococcoides mccartyi (strain ATCC BAA-2266 / KCTC 15142 / 195) (Dehalococcoides ethenogenes (strain 195)).